We begin with the raw amino-acid sequence, 96 residues long: Co-chaperonin GroES (96 aa).

The protein belongs to the GroES chaperonin family. Heptamer of 7 subunits arranged in a ring. Interacts with the chaperonin GroEL.

It is found in the cytoplasm. In terms of biological role, together with the chaperonin GroEL, plays an essential role in assisting protein folding. The GroEL-GroES system forms a nano-cage that allows encapsulation of the non-native substrate proteins and provides a physical environment optimized to promote and accelerate protein folding. GroES binds to the apical surface of the GroEL ring, thereby capping the opening of the GroEL channel. The chain is Co-chaperonin GroES from Shewanella loihica (strain ATCC BAA-1088 / PV-4).